A 360-amino-acid chain; its full sequence is Phosphoserine aminotransferase (360 aa).

L-glutamate is bound at residue Arg42. Residues 76-77 (AR), Trp102, Thr153, Asp172, and Gln195 each bind pyridoxal 5'-phosphate. At Lys196 the chain carries N6-(pyridoxal phosphate)lysine. Position 237 to 238 (237 to 238 (NT)) interacts with pyridoxal 5'-phosphate.

The protein belongs to the class-V pyridoxal-phosphate-dependent aminotransferase family. SerC subfamily. Homodimer. Requires pyridoxal 5'-phosphate as cofactor.

It is found in the cytoplasm. It carries out the reaction O-phospho-L-serine + 2-oxoglutarate = 3-phosphooxypyruvate + L-glutamate. The enzyme catalyses 4-(phosphooxy)-L-threonine + 2-oxoglutarate = (R)-3-hydroxy-2-oxo-4-phosphooxybutanoate + L-glutamate. The protein operates within amino-acid biosynthesis; L-serine biosynthesis; L-serine from 3-phospho-D-glycerate: step 2/3. It participates in cofactor biosynthesis; pyridoxine 5'-phosphate biosynthesis; pyridoxine 5'-phosphate from D-erythrose 4-phosphate: step 3/5. Functionally, catalyzes the reversible conversion of 3-phosphohydroxypyruvate to phosphoserine and of 3-hydroxy-2-oxo-4-phosphonooxybutanoate to phosphohydroxythreonine. This chain is Phosphoserine aminotransferase, found in Aliivibrio fischeri (strain ATCC 700601 / ES114) (Vibrio fischeri).